Here is a 204-residue protein sequence, read N- to C-terminus: Ubiquitin-conjugating enzyme E2 S (204 aa).

Residues 14–160 (QIIKQVAREI…AKMFTEIHAK (147 aa)) enclose the UBC core domain. The active-site Glycyl thioester intermediate is the cysteine 98. Over residues 165–176 (SSNNISEGQQES) the composition is skewed to polar residues. The segment at 165-204 (SSNNISEGQQESLPGKKRVAVNEKMCDKKKKDKKRALKRL) is disordered. Residues 191–204 (DKKKKDKKRALKRL) show a composition bias toward basic residues.

This sequence belongs to the ubiquitin-conjugating enzyme family.

It catalyses the reaction S-ubiquitinyl-[E1 ubiquitin-activating enzyme]-L-cysteine + [E2 ubiquitin-conjugating enzyme]-L-cysteine = [E1 ubiquitin-activating enzyme]-L-cysteine + S-ubiquitinyl-[E2 ubiquitin-conjugating enzyme]-L-cysteine.. It functions in the pathway protein modification; protein ubiquitination. Its function is as follows. Catalyzes the covalent attachment of ubiquitin to other proteins. Acts as an essential factor of the anaphase promoting complex/cyclosome (APC/C), a cell cycle-regulated ubiquitin ligase that controls progression through mitosis. Acts by specifically elongating polyubiquitin chains initiated by the E2 enzyme UBCH10 on APC/C substrates, enhancing the degradation of APC/C substrates by the proteasome and promoting mitotic exit. In Nematostella vectensis (Starlet sea anemone), this protein is Ubiquitin-conjugating enzyme E2 S.